The following is a 596-amino-acid chain: Aspartate--tRNA(Asp/Asn) ligase (596 aa).

E175 contacts L-aspartate. Residues 199-202 are aspartate; the sequence is QQYK. Residues R221 and H454 each contribute to the L-aspartate site. 221–223 is an ATP binding site; sequence RDE. E488 is an ATP binding site. R495 contributes to the L-aspartate binding site. 540–543 contributes to the ATP binding site; the sequence is GIDR.

The protein belongs to the class-II aminoacyl-tRNA synthetase family. Type 1 subfamily. In terms of assembly, homodimer.

Its subcellular location is the cytoplasm. The catalysed reaction is tRNA(Asx) + L-aspartate + ATP = L-aspartyl-tRNA(Asx) + AMP + diphosphate. Aspartyl-tRNA synthetase with relaxed tRNA specificity since it is able to aspartylate not only its cognate tRNA(Asp) but also tRNA(Asn). Reaction proceeds in two steps: L-aspartate is first activated by ATP to form Asp-AMP and then transferred to the acceptor end of tRNA(Asp/Asn). In Rhizobium leguminosarum bv. trifolii (strain WSM2304), this protein is Aspartate--tRNA(Asp/Asn) ligase.